A 61-amino-acid polypeptide reads, in one-letter code: Large ribosomal subunit protein uL30 (61 aa).

Belongs to the universal ribosomal protein uL30 family. As to quaternary structure, part of the 50S ribosomal subunit.

The sequence is that of Large ribosomal subunit protein uL30 from Corynebacterium glutamicum (strain R).